We begin with the raw amino-acid sequence, 45 residues long: Photosystem II reaction center protein K (45 aa).

The propeptide occupies 1 to 8 (MLMSLFLA). The helical transmembrane segment at 23 to 43 (ILPIIPLFFLLLAFVWQAAIG) threads the bilayer.

The protein belongs to the PsbK family. PSII is composed of 1 copy each of membrane proteins PsbA, PsbB, PsbC, PsbD, PsbE, PsbF, PsbH, PsbI, PsbJ, PsbK, PsbL, PsbM, PsbT, PsbX, PsbY, PsbZ, Psb30/Ycf12, at least 3 peripheral proteins of the oxygen-evolving complex and a large number of cofactors. It forms dimeric complexes.

Its subcellular location is the plastid. The protein resides in the cyanelle thylakoid membrane. Functionally, one of the components of the core complex of photosystem II (PSII). PSII is a light-driven water:plastoquinone oxidoreductase that uses light energy to abstract electrons from H(2)O, generating O(2) and a proton gradient subsequently used for ATP formation. It consists of a core antenna complex that captures photons, and an electron transfer chain that converts photonic excitation into a charge separation. In Cyanophora paradoxa, this protein is Photosystem II reaction center protein K.